Consider the following 123-residue polypeptide: Small ribosomal subunit protein uS12 (123 aa).

Residue Asp89 is modified to 3-methylthioaspartic acid.

The protein belongs to the universal ribosomal protein uS12 family. Part of the 30S ribosomal subunit. Contacts proteins S8 and S17. May interact with IF1 in the 30S initiation complex.

In terms of biological role, with S4 and S5 plays an important role in translational accuracy. Functionally, interacts with and stabilizes bases of the 16S rRNA that are involved in tRNA selection in the A site and with the mRNA backbone. Located at the interface of the 30S and 50S subunits, it traverses the body of the 30S subunit contacting proteins on the other side and probably holding the rRNA structure together. The combined cluster of proteins S8, S12 and S17 appears to hold together the shoulder and platform of the 30S subunit. This chain is Small ribosomal subunit protein uS12, found in Rhizobium etli (strain ATCC 51251 / DSM 11541 / JCM 21823 / NBRC 15573 / CFN 42).